We begin with the raw amino-acid sequence, 237 residues long: Probable septum site-determining protein MinC (237 aa).

The protein belongs to the MinC family. In terms of assembly, interacts with MinD and FtsZ.

Its function is as follows. Cell division inhibitor that blocks the formation of polar Z ring septums. Rapidly oscillates between the poles of the cell to destabilize FtsZ filaments that have formed before they mature into polar Z rings. Prevents FtsZ polymerization. The sequence is that of Probable septum site-determining protein MinC from Neisseria gonorrhoeae.